Reading from the N-terminus, the 300-residue chain is Tyrosine recombinase XerC (300 aa).

The region spanning 2–88 (TQEGKLEQQF…SLRSFYTFLL (87 aa)) is the Core-binding (CB) domain. The 186-residue stretch at 109–294 (RLPKFFYSEE…TKEHLKSTYM (186 aa)) folds into the Tyr recombinase domain. Residues R150, K174, H246, R249, and H272 contribute to the active site. Y281 serves as the catalytic O-(3'-phospho-DNA)-tyrosine intermediate.

The protein belongs to the 'phage' integrase family. XerC subfamily. In terms of assembly, forms a cyclic heterotetrameric complex composed of two molecules of XerC and two molecules of XerD.

The protein localises to the cytoplasm. Site-specific tyrosine recombinase, which acts by catalyzing the cutting and rejoining of the recombining DNA molecules. The XerC-XerD complex is essential to convert dimers of the bacterial chromosome into monomers to permit their segregation at cell division. It also contributes to the segregational stability of plasmids. The sequence is that of Tyrosine recombinase XerC from Listeria monocytogenes serotype 4a (strain HCC23).